The following is a 367-amino-acid chain: Flagellar P-ring protein (367 aa).

The first 21 residues, 1–21, serve as a signal peptide directing secretion; that stretch reads MYVFKALAGIVLALVATLAHA.

The protein belongs to the FlgI family. The basal body constitutes a major portion of the flagellar organelle and consists of four rings (L,P,S, and M) mounted on a central rod.

The protein resides in the periplasm. It is found in the bacterial flagellum basal body. In terms of biological role, assembles around the rod to form the L-ring and probably protects the motor/basal body from shearing forces during rotation. The chain is Flagellar P-ring protein from Salmonella arizonae (strain ATCC BAA-731 / CDC346-86 / RSK2980).